A 67-amino-acid chain; its full sequence is UPF0337 protein msl9551 (67 aa).

The protein belongs to the UPF0337 (CsbD) family.

This chain is UPF0337 protein msl9551, found in Mesorhizobium japonicum (strain LMG 29417 / CECT 9101 / MAFF 303099) (Mesorhizobium loti (strain MAFF 303099)).